A 491-amino-acid polypeptide reads, in one-letter code: Large ribosomal subunit protein mL101 (rPPR4) (491 aa).

PPR repeat units lie at residues 122 to 156 (TELT…NITP), 157 to 191 (SSMS…NVMP), 192 to 226 (DSYT…GRVA), 228 to 262 (DWTT…NTQR), 263 to 293 (DFTA…LRLA), 298 to 328 (SNVA…WQAN), 333 to 367 (DIRI…GGKL), and 368 to 402 (NAKT…GKGD).

It belongs to the PPR family. P subfamily. Component of the mitochondrial ribosome large subunit.

It localises to the mitochondrion. This is Large ribosomal subunit protein mL101 (rPPR4) from Arabidopsis thaliana (Mouse-ear cress).